The following is a 379-amino-acid chain: Heme chaperone HemW (379 aa).

Residues 1–232 (MLQKPNSAYF…MDILAKNGYN (232 aa)) enclose the Radical SAM core domain. Tyrosine 9 serves as a coordination point for S-adenosyl-L-methionine. Positions 15, 19, and 22 each coordinate [4Fe-4S] cluster. S-adenosyl-L-methionine is bound by residues glycine 60, 61–62 (GT), glutamate 93, glutamine 120, arginine 132, and aspartate 157.

It belongs to the anaerobic coproporphyrinogen-III oxidase family. HemW subfamily. As to quaternary structure, homodimer.

The protein localises to the cytoplasm. It localises to the cell membrane. Its function is as follows. Could serve in the delivery of heme to a membrane-localized target protein. Binds one molecule of heme per monomer, possibly covalently; heme and Fe-S cluster binding are independent. Incubation with the reductant sodium dithionite increases binding. Does not have coproporphyrinogen III dehydrogenase activity in vitro, does not complement an E.coli hemN deletion in vivo. Binds 1 Fe-S cluster, it is probably [4Fe-4S]. The cluster is coordinated with 3 cysteines and an exchangeable S-adenosyl-L-methionine; only dimeric protein has the cluster. This is Heme chaperone HemW from Lactococcus lactis subsp. lactis (strain IL1403) (Streptococcus lactis).